The primary structure comprises 60 residues: Cytotoxin 3 (60 aa).

Intrachain disulfides connect cysteine 3–cysteine 21, cysteine 14–cysteine 38, cysteine 42–cysteine 53, and cysteine 54–cysteine 59.

It belongs to the three-finger toxin family. Short-chain subfamily. Type IA cytotoxin sub-subfamily. In terms of assembly, monomer in solution; Homodimer and oligomer in the presence of negatively charged lipids forming a pore with a size ranging between 20 and 30 Angstroms. As to expression, expressed by the venom gland.

The protein resides in the secreted. The protein localises to the target cell membrane. Its function is as follows. Shows cytolytic activity on many different cells by forming pore in lipid membranes. In vivo, increases heart rate or kills the animal by cardiac arrest. In addition, it binds to heparin with high affinity, interacts with Kv channel-interacting protein 1 (KCNIP1) in a calcium-independent manner, and binds to integrin alpha-V/beta-3 (ITGAV/ITGB3) with moderate affinity. In Naja annulifera (Banded Egyptian cobra), this protein is Cytotoxin 3.